The following is a 545-amino-acid chain: MGSTDTDIEELENATYKYLIGEQTEKMWQRLKGILRCLVKQLEKGDVNVVDLKKNIEYAASVLEAVYIDETRRLLDTEDELSDIQTDSVPSEVRDWLASTFTRKMGMMKKKPEEKPKFRSIVHAVQAGIFVERMYRKNYHMVGLTYPAAVIVTLKEVDKWSFDVFALNEASGEHSLKFMIYELFTRYDLINRFKIPVSCLIAFAEALEVGYSKHKNPYHNLVHAADVTQTVHYIMLHTGIMHWLTELEILAMVFAAAIHDYEHTGTTNNFHIQTRSDVAILYNDRSVLENHHVSAAYRLMQEEEMNILVNLSKDDWRDLRNLVIEMVLATDMSGHFQQIKNIRNSLQQPEGIDRAKTMSLILHAADISHPAKTWKLHYRWTMALMEEFFLQGDKEAELGLPFSPLCDRKSTMVAQSQIGFIDFIVEPTFSLLTDSTEKIVIPLIEEASKSQSSNYGASSSSTMIGFHVADSLRRSNTKGSVCDGSYAPDYSLSAVDLKSFKNNLVDIIQQNKERWKELAAQGELDLHKNSEELGNTEEKHADTRP.

Calmodulin-binding stretches follow at residues 24-44 (TEKMWQRLKGILRCLVKQLEK) and 114-137 (EKPKFRSIVHAVQAGIFVERMYRK). Positions 142–522 (VGLTYPAAVI…ERWKELAAQG (381 aa)) constitute a PDEase domain. The active-site Proton donor is H219. Residues H223, H259, D260, and D366 each contribute to the Zn(2+) site. D260 contacts Mg(2+). A disordered region spans residues 526–545 (LHKNSEELGNTEEKHADTRP).

Belongs to the cyclic nucleotide phosphodiesterase family. PDE1 subfamily. Homodimer. Interacts with YWHAZ. Zn(2+) serves as cofactor. Mg(2+) is required as a cofactor. As to expression, expressed in brain, kidney and testis.

The protein localises to the cell projection. Its subcellular location is the cilium. The protein resides in the flagellum. The enzyme catalyses a nucleoside 3',5'-cyclic phosphate + H2O = a nucleoside 5'-phosphate + H(+). The catalysed reaction is 3',5'-cyclic GMP + H2O = GMP + H(+). It catalyses the reaction 3',5'-cyclic AMP + H2O = AMP + H(+). Its activity is regulated as follows. Type I PDE are activated by the binding of calmodulin in the presence of Ca(2+). With respect to regulation, activated by the binding of calmodulin in the presence of Ca(2+). In terms of biological role, calcium/calmodulin-dependent cyclic nucleotide phosphodiesterase with a dual specificity for the second messengers cGMP and cAMP, which are key regulators of many important physiological processes. Has a higher efficiency with cGMP compared to cAMP. This is Dual specificity calcium/calmodulin-dependent 3',5'-cyclic nucleotide phosphodiesterase 1A from Mus musculus (Mouse).